A 565-amino-acid polypeptide reads, in one-letter code: Potassium-transporting ATPase potassium-binding subunit (565 aa).

Transmembrane regions (helical) follow at residues L6–L26, L63–A83, G132–I152, L175–I195, L250–F270, L283–L303, F327–V347, F354–G374, G379–G399, A418–C438, L483–I503, and G524–I544.

The protein belongs to the KdpA family. As to quaternary structure, the system is composed of three essential subunits: KdpA, KdpB and KdpC.

It is found in the cell inner membrane. In terms of biological role, part of the high-affinity ATP-driven potassium transport (or Kdp) system, which catalyzes the hydrolysis of ATP coupled with the electrogenic transport of potassium into the cytoplasm. This subunit binds the periplasmic potassium ions and delivers the ions to the membrane domain of KdpB through an intramembrane tunnel. The chain is Potassium-transporting ATPase potassium-binding subunit from Edwardsiella ictaluri (strain 93-146).